The following is a 484-amino-acid chain: Glutamate--tRNA ligase (484 aa).

The 'HIGH' region motif lies at 11 to 21 (PSPTGLLHIGN). Residues 255–259 (KLSKR) carry the 'KMSKS' region motif. Residue lysine 258 coordinates ATP.

This sequence belongs to the class-I aminoacyl-tRNA synthetase family. Glutamate--tRNA ligase type 1 subfamily. In terms of assembly, monomer.

Its subcellular location is the cytoplasm. The catalysed reaction is tRNA(Glu) + L-glutamate + ATP = L-glutamyl-tRNA(Glu) + AMP + diphosphate. Its function is as follows. Catalyzes the attachment of glutamate to tRNA(Glu) in a two-step reaction: glutamate is first activated by ATP to form Glu-AMP and then transferred to the acceptor end of tRNA(Glu). This chain is Glutamate--tRNA ligase, found in Streptococcus thermophilus (strain CNRZ 1066).